The sequence spans 158 residues: Protein SREK1IP1 (158 aa).

Disordered stretches follow at residues 1-20 (MAAPGPNKDNIRAGCKRCGY) and 45-158 (SSTS…SDTD). Residues 13–30 (AGCKRCGYPGHLTFECRN) form a CCHC-type zinc finger. Residues 59–79 (ALSKEKIFGSHSKGSQEDSRK) show a composition bias toward basic and acidic residues. 2 stretches are compositionally biased toward basic residues: residues 80-98 (EKHKKKSKERSRGKAKKRS) and 111-140 (KKKKKRKSNKKKGKKEKREKERKHKKKQKK). The segment covering 145–158 (SSSSDSSSESSDTD) has biased composition (low complexity).

Functionally, possible splicing regulator involved in the control of cellular survival. This Danio rerio (Zebrafish) protein is Protein SREK1IP1 (srek1ip1).